Reading from the N-terminus, the 1090-residue chain is MSVWNYVVTAHKPTSVTHSCVGNFTGPNQLNLIVAKCTRIEIHLLTPQGLQPMIDVPIYGRIATLELFRPHNETQDFLFIATERYKFCVLQWDGEKSELLTRAMGDVSDRIGRPTDNGQIGIIDPDCRLIGLHLYDGLFKVIPFDNKGQLKEAFNIRLEELQVLDIKFLYGCVKPTIVVLYQDNKDARHVKTYEVALKDKDFVEGPWSQNNLDNGAGLLIPVPAPLGGVIIIGEETIVYCNANSTFRAIPIKQSIIRAYGRVDPDGSRYLLGDNAGILHLLVLTHERERVTGLKIEYLGETSIASSISYLDNGVVYVGSRFGDSQLVKLNLQADPNGSYVEVLERYVNLGPIVDFCVVDLDRQGQGQVVTCSGAFKDGSLRVVRNGIGINEQASVELQGIKGLWSLKSSFNDPYDMYLVVSFISETRFLAMNMEDELEETEIEGFDAQTQTLFCQNAINDLLIQVTANSVRLVSCTSRELVDQWNAPEGFSVNVASANASQVLLATGGGHLVYLEIKDSKLVEVKHIQLEHEISCVDLNPIGENPQYSSLAAVGMWTDISVRILSLPDLELIRKENLGGEIVPRSVLLCTLEGVSYLLCALGDGHLFSFLLNASTGELTDRKKVSLGTQPISLRTFSSKGTTHVFASSDRPTVIYSSNKKLLYSNVNLKEVNHMCPFNTAAIPDSLAIAKEGELSIGTIDDIQKLHIRTIPLNEQARRICHQEQSRTLAFCSFKHNQTSIEESETHFVRLLDHQTFEFLSIYQLDQYEHGCSIISCSFSDDNNVYYCVGTAYVLPEENEPSKGRILVFAVEDGRLQLIVEKETKGAVYSLNAFNGKLLAAINQKIQLYKWMLREDGSHELQSECGHHGHILALYTQTRGDFIVVGDLMKSISLLVYKHEESAIEELARDYNANWMSAVEMLDDEIYIGAENNYNIFTVRKNSDAATDEERGRLEVVGEYHLGEFVNRLRHGSLVMRLPDSEMGQIPTVIFGTINGVIGIIASLPHEQYVFLEKLQSTLVKFIKGVGNLSHEQWRSFHNDKKTSEARNFLDGDLIESFLDLSRNKMEEVAKGMGVPVEELSKRVEELTRLH.

The protein belongs to the DDB1 family. In terms of assembly, component of the UV-DDB complex, which is composed of DDB1 and DDB2. As to expression, expressed in proliferating tissues. Highly expressed in shoot apical meristem (SAM). Expressed in roots, young leaves, flag leaves, and panicles. Not detected in mature leaves.

It is found in the nucleus. Its function is as follows. Required for DNA repair. Binds to DDB2 to form the UV-damaged DNA-binding protein complex (the UV-DDB complex). The UV-DDB complex may recognize UV-induced DNA damage and recruit proteins of the nucleotide excision repair pathway (the NER pathway) to initiate DNA repair. May function as the substrate recognition module for a DCX (DDB1-CUL4-X-box) E3 ubiquitin-protein ligase complex. The sequence is that of DNA damage-binding protein 1 from Oryza sativa subsp. japonica (Rice).